The following is a 946-amino-acid chain: Zinc finger CCCH-type antiviral protein 1 (946 aa).

The N-terminal domain stretch occupies residues 1-254; it reads MTDPEVFCFI…DRSKSRDRFH (254 aa). Positions 69-76 match the Nuclear localization signal motif; it reads RARVCRRK. 4 C3H1-type zinc fingers span residues 73–86, 87–113, 150–172, and 173–194; these read CRRK…DSLH, LCKL…HDVL, CKSY…ERLH, and ICEH…HNLM. 2 disordered regions span residues 221–283 and 302–354; these read NKHT…KDPL and RAQL…AAGF. A binding to EXOSC5 region spans residues 224-254; sequence TRRNPPSMRAPHPHRRGGAHRDRSKSRDRFH. Residues 242–257 are compositionally biased toward basic and acidic residues; that stretch reads AHRDRSKSRDRFHHNS. At S257 the chain carries Phosphoserine. The residue at position 262 (S262) is a Phosphoserine; by GSK3-beta. Phosphoserine occurs at positions 265, 269, and 273. Residue T277 is modified to Phosphothreonine. The Nuclear export signal signature appears at 283–290; sequence LEDVSADV. Phosphoserine is present on residues S324 and S350. A Nuclear localization signal motif is present at residues 412 to 413; it reads KR. Residue S425 is modified to Phosphoserine. The interval 461–491 is disordered; sequence NPAWPGTSTHNGPNGFSQIMDETPNVSKSSP. Residues 466-477 show a composition bias toward polar residues; sequence GTSTHNGPNGFS. Y508 is subject to Phosphotyrosine. The disordered stretch occupies residues 523 to 570; the sequence is GETTTPVQGSNRLPPSPLSSSTSHRVAASGSPGKSSTHASVSPASEPS. A compositionally biased stretch (polar residues) spans 524–533; sequence ETTTPVQGSN. S553 carries the post-translational modification Phosphoserine. Residues 554–567 are compositionally biased toward polar residues; that stretch reads PGKSSTHASVSPAS. Residues S583 and S680 each carry the phosphoserine modification. A WWE domain is found at 684 to 771; it reads FVEKTLNSVF…ASKTQRHVVR (88 aa). In terms of domain architecture, PARP catalytic spans 805–946; it reads SPQRNASTVS…SLDSSGLQRK (142 aa).

This sequence belongs to the ARTD/PARP family. In terms of assembly, homodimer or homooligomer. Homooligomerization is essential for its antiviral activity. Interacts with EXOSC5. Interacts (via N-terminal domain) with DDX17 in an RNA-independent manner. Interacts with EXOSC3, EXOSC7, DCP2 and DCP1A. Interacts with PARN in an RNA-independent manner. Interacts with XRN1 in an RNA-dependent manner. Interacts (via N-terminal domain) with DHX30 (via N-terminus) in an RNA-independent manner. Isoform 2 interacts (via zinc-fingers) with RIGI in an RNA-dependent manner. Phosphorylation at Ser-273 is essential for sequential phosphorylation of Ser-269, Ser-265, Ser-262 and Ser-257 by GSK3-beta. Phosphorylation by GSK3-beta enhances its antiviral activity.

It localises to the cytoplasm. The protein resides in the nucleus. Functionally, antiviral protein which inhibits the replication of viruses by recruiting the cellular RNA degradation machineries to degrade the viral mRNAs. Binds to a ZAP-responsive element (ZRE) present in the target viral mRNA, recruits cellular poly(A)-specific ribonuclease PARN to remove the poly(A) tail, and the 3'-5' exoribonuclease complex exosome to degrade the RNA body from the 3'-end. It also recruits the decapping complex DCP1-DCP2 through RNA helicase p72 (DDX17) to remove the cap structure of the viral mRNA to initiate its degradation from the 5'-end. Its target viruses belong to families which include retroviridae: human immunodeficiency virus type 1 (HIV-1) and moloney and murine leukemia virus (MoMLV), filoviridae: ebola virus (EBOV) and marburg virus (MARV), togaviridae: sindbis virus (SINV) and Ross river virus (RRV). Specifically targets the multiply spliced but not unspliced or singly spliced HIV-1 mRNAs for degradation. Isoform 1 is a more potent viral inhibitor than isoform 2. Isoform 2 acts as a positive regulator of RIG-I signaling resulting in activation of the downstream effector IRF3 leading to the expression of type I IFNs and IFN stimulated genes (ISGs). The sequence is that of Zinc finger CCCH-type antiviral protein 1 (Zc3hav1) from Mus musculus (Mouse).